We begin with the raw amino-acid sequence, 465 residues long: Clusterin-like protein 1 (465 aa).

The N-terminal stretch at methionine 1–cysteine 20 is a signal peptide. The stretch at leucine 62–valine 107 forms a coiled coil. Intrachain disulfides connect cysteine 105–cysteine 333, cysteine 116–cysteine 325, cysteine 119–cysteine 322, cysteine 124–cysteine 315, and cysteine 131–cysteine 305. Residues asparagine 196 and asparagine 257 are each glycosylated (N-linked (GlcNAc...) asparagine). The interval leucine 280–arginine 300 is disordered. Asparagine 311, asparagine 351, asparagine 412, and asparagine 430 each carry an N-linked (GlcNAc...) asparagine glycan.

It belongs to the clusterin family.

It is found in the secreted. This chain is Clusterin-like protein 1, found in Bos taurus (Bovine).